Here is a 148-residue protein sequence, read N- to C-terminus: Nucleoside diphosphate kinase (148 aa).

ATP-binding residues include Lys9, Phe57, Arg85, Thr91, Arg102, and Asn112. His115 serves as the catalytic Pros-phosphohistidine intermediate.

The protein belongs to the NDK family. It depends on Mg(2+) as a cofactor.

The enzyme catalyses a 2'-deoxyribonucleoside 5'-diphosphate + ATP = a 2'-deoxyribonucleoside 5'-triphosphate + ADP. The catalysed reaction is a ribonucleoside 5'-diphosphate + ATP = a ribonucleoside 5'-triphosphate + ADP. Its function is as follows. Major role in the synthesis of nucleoside triphosphates other than ATP. The ATP gamma phosphate is transferred to the NDP beta phosphate via a ping-pong mechanism, using a phosphorylated active-site intermediate. The chain is Nucleoside diphosphate kinase from Helianthus annuus (Common sunflower).